A 67-amino-acid polypeptide reads, in one-letter code: Gallinacin-6 (67 aa).

Positions 1-19 are cleaved as a signal peptide; that stretch reads MRILYLLLSVLFVVLQGVA. A propeptide spanning residues 20–25 is cleaved from the precursor; the sequence is GQPYFS. Disulfide bonds link Cys-31-Cys-60, Cys-38-Cys-53, and Cys-43-Cys-61.

Belongs to the beta-defensin family. In terms of tissue distribution, expressed in bone marrow, testis, ovary, lung and trachea. Expressed in the ovarian stroma, but not in the ovarian follicles.

It is found in the secreted. The protein localises to the cytoplasmic granule. Its function is as follows. Has bactericidal activity. Potent activity against S.typhimurium and S.entiriditis. This Gallus gallus (Chicken) protein is Gallinacin-6 (GAL6).